Reading from the N-terminus, the 608-residue chain is MLLDEIKRMSYDELKRLAEDIRKRITEVVLKNGGHLASNLGTIELTLALYRVFDPREDAIIWDTGHQAYTHKILTGRDDLFHTIRTFGGLSGFVTRRESPLDWFGTGHAGTSIAAGLGFEKAFELLGEKRHVVVVIGDGALTSGMALEALNQLKNLNSKMKIILNDNGMSISPNVGGLAYHLSKLRTSPIYLKGKKVLKKVLEKTEIGFEVEEEMKYLRDSLKGMIQGTNFFESLGLKYFGPFDGHNIELLEKVFKRIRDYDYSSVVHVVTKKGKGFTAAEENPTKYHSASPSGKPKMLSYSELLGHTLSRVAREDKKIVAITAAMADGTGLSIFQKEHPDRFFDLGITEQTCVTFGAALGLHGMKPVVAIYSTFLQRAYDQIIHDVALQNAPVLFAIDRSGVVGEDGPTHHGLFDINYLLPVPNMKIISPSSPEEFVNSLYTVLKHLDGPVAIRYPKESFYGEVESLLENMKEIDLGWKILKRGREAAIIATGTILNEVLKIPLDVTVVNALTVKPLDTAVLKEIARDHDLIITVEEAMKIGGFGSFVAQRLQEMGWQGKIVNLGVEDLFVPHGGRKELLSMLGLDSEGLTKTVLTYIKARSREGKV.

Thiamine diphosphate-binding positions include H66 and 107-109 (GHA). D138 is a binding site for Mg(2+). Thiamine diphosphate is bound by residues 139–140 (GA), N167, F277, and E350. N167 is a binding site for Mg(2+).

It belongs to the transketolase family. DXPS subfamily. Homodimer. It depends on Mg(2+) as a cofactor. The cofactor is thiamine diphosphate.

It catalyses the reaction D-glyceraldehyde 3-phosphate + pyruvate + H(+) = 1-deoxy-D-xylulose 5-phosphate + CO2. It functions in the pathway metabolic intermediate biosynthesis; 1-deoxy-D-xylulose 5-phosphate biosynthesis; 1-deoxy-D-xylulose 5-phosphate from D-glyceraldehyde 3-phosphate and pyruvate: step 1/1. Functionally, catalyzes the acyloin condensation reaction between C atoms 2 and 3 of pyruvate and glyceraldehyde 3-phosphate to yield 1-deoxy-D-xylulose-5-phosphate (DXP). This Thermotoga maritima (strain ATCC 43589 / DSM 3109 / JCM 10099 / NBRC 100826 / MSB8) protein is 1-deoxy-D-xylulose-5-phosphate synthase.